The following is a 188-amino-acid chain: Adrenodoxin, mitochondrial (188 aa).

The N-terminal 64 residues, 1–64 (MAAAPGARLL…RPLSVSARAR (64 aa)), are a transit peptide targeting the mitochondrion. Residue Ser-67 is modified to Phosphoserine. A 2Fe-2S ferredoxin-type domain is found at 69–175 (DKITVHFKNR…NMTVRVPEAV (107 aa)). An N6-acetyllysine; alternate modification is found at Lys-70. Lys-70 carries the N6-succinyllysine; alternate modification. The [2Fe-2S] cluster site is built by Cys-110, Cys-116, Cys-119, and Cys-156. At Lys-162 the chain carries N6-succinyllysine. The residue at position 181 (Ser-181) is a Phosphoserine.

It belongs to the adrenodoxin/putidaredoxin family. As to quaternary structure, interacts with CYP11A1. [2Fe-2S] cluster serves as cofactor.

It localises to the mitochondrion matrix. Its function is as follows. Essential for the synthesis of various steroid hormones, participates in the reduction of mitochondrial cytochrome P450 for steroidogenesis. Transfers electrons from adrenodoxin reductase to CYP11A1, a cytochrome P450 that catalyzes cholesterol side-chain cleavage. Does not form a ternary complex with adrenodoxin reductase and CYP11A1 but shuttles between the two enzymes to transfer electrons. This is Adrenodoxin, mitochondrial (Fdx1) from Mus musculus (Mouse).